An 83-amino-acid polypeptide reads, in one-letter code: Toxin CjTL8 (83 aa).

The first 20 residues, 1–20 (MSSAIKILALLMVLVALAQA), serve as a signal peptide directing secretion. Positions 21-44 (KPRKDYRAYPDFDDKSVILEDDKR) are excised as a propeptide. Phe81 carries the post-translational modification Phenylalanine amide.

Post-translationally, contains 3 disulfide bonds.

It localises to the secreted. It is found in the nematocyst. In terms of biological role, in vivo, induces immediate paralysis on shrimps (C.multidentata), followed by death when high doses are injected. No activity is observed when injected into fly larvae (M.domestica). The chain is Toxin CjTL8 from Epiactis japonica (Sea anemone).